Here is a 245-residue protein sequence, read N- to C-terminus: MAEPKYKRVLIKLSGEALAGEKGVGIDLPTVQAIAKEIAEVADSGIQIALVIGGGNLWRGEPAAEAGMDRVQADYTGMLGTTMNALVMADSLKQLGVDTRVQTAIDMKSVAEPYIRGRALRHFEKGRIVIFAAGIGSPYFSTDTTAALRAAEIESDAILMAKNGVDGVYNDDPRKNADAVKFDKLTHVEVIKRGLKIMDATASTLSMDNDIDLVVFNMNEPGNIKRVIFGEQIGTTVSNKAELRK.

12–15 (KLSG) serves as a coordination point for ATP. The interval 20 to 25 (GEKGVG) is involved in allosteric activation by GTP. G54 is a binding site for UMP. ATP-binding residues include G55 and R59. UMP-binding positions include D74 and 135 to 142 (IGSPYFST). 3 residues coordinate ATP: N163, Y169, and D172.

It belongs to the UMP kinase family. As to quaternary structure, homohexamer.

It is found in the cytoplasm. It catalyses the reaction UMP + ATP = UDP + ADP. Its pathway is pyrimidine metabolism; CTP biosynthesis via de novo pathway; UDP from UMP (UMPK route): step 1/1. Allosterically activated by GTP. Inhibited by UTP. In terms of biological role, catalyzes the reversible phosphorylation of UMP to UDP. The polypeptide is Uridylate kinase (Streptococcus thermophilus (strain ATCC BAA-491 / LMD-9)).